Here is a 101-residue protein sequence, read N- to C-terminus: Small ribosomal subunit protein uS14 (101 aa).

The protein belongs to the universal ribosomal protein uS14 family. In terms of assembly, part of the 30S ribosomal subunit. Contacts proteins S3 and S10.

Binds 16S rRNA, required for the assembly of 30S particles and may also be responsible for determining the conformation of the 16S rRNA at the A site. The protein is Small ribosomal subunit protein uS14 of Paraburkholderia phytofirmans (strain DSM 17436 / LMG 22146 / PsJN) (Burkholderia phytofirmans).